Reading from the N-terminus, the 379-residue chain is Cytochrome b (379 aa).

4 helical membrane passes run Phe33–Met53, Trp77–Val98, Trp113–Leu133, and Phe178–Leu198. Heme b contacts are provided by His83 and His97. Heme b is bound by residues His182 and His196. An a ubiquinone-binding site is contributed by His201. 4 helical membrane passes run Ile226–Phe246, Leu288–Asn308, Val320–Gly340, and Phe347–Pro367.

Belongs to the cytochrome b family. As to quaternary structure, the cytochrome bc1 complex contains 11 subunits: 3 respiratory subunits (MT-CYB, CYC1 and UQCRFS1), 2 core proteins (UQCRC1 and UQCRC2) and 6 low-molecular weight proteins (UQCRH/QCR6, UQCRB/QCR7, UQCRQ/QCR8, UQCR10/QCR9, UQCR11/QCR10 and a cleavage product of UQCRFS1). This cytochrome bc1 complex then forms a dimer. Heme b is required as a cofactor.

It localises to the mitochondrion inner membrane. Its function is as follows. Component of the ubiquinol-cytochrome c reductase complex (complex III or cytochrome b-c1 complex) that is part of the mitochondrial respiratory chain. The b-c1 complex mediates electron transfer from ubiquinol to cytochrome c. Contributes to the generation of a proton gradient across the mitochondrial membrane that is then used for ATP synthesis. The protein is Cytochrome b (MT-CYB) of Akodon iniscatus (Intelligent grass mouse).